Reading from the N-terminus, the 110-residue chain is Large ribosomal subunit protein uL22 (110 aa).

This sequence belongs to the universal ribosomal protein uL22 family. Part of the 50S ribosomal subunit.

Its function is as follows. This protein binds specifically to 23S rRNA; its binding is stimulated by other ribosomal proteins, e.g. L4, L17, and L20. It is important during the early stages of 50S assembly. It makes multiple contacts with different domains of the 23S rRNA in the assembled 50S subunit and ribosome. Functionally, the globular domain of the protein is located near the polypeptide exit tunnel on the outside of the subunit, while an extended beta-hairpin is found that lines the wall of the exit tunnel in the center of the 70S ribosome. This chain is Large ribosomal subunit protein uL22, found in Nitrosomonas europaea (strain ATCC 19718 / CIP 103999 / KCTC 2705 / NBRC 14298).